A 276-amino-acid polypeptide reads, in one-letter code: F-actin-capping protein subunit alpha (276 aa).

It belongs to the F-actin-capping protein alpha subunit family. Heterodimer of an alpha and a beta subunit.

Its subcellular location is the cytoplasm. The protein localises to the cytoskeleton. Its function is as follows. F-actin-capping proteins bind in a Ca(2+)-independent manner to the fast growing ends of actin filaments (barbed end) thereby blocking the exchange of subunits at these ends. Unlike other capping proteins (such as gelsolin and severin), these proteins do not sever actin filaments. This is F-actin-capping protein subunit alpha (cap1) from Aspergillus fumigatus (strain ATCC MYA-4609 / CBS 101355 / FGSC A1100 / Af293) (Neosartorya fumigata).